Here is a 465-residue protein sequence, read N- to C-terminus: uncharacterized protein (465 aa).

Disordered stretches follow at residues 1–55 (MNSS…SSHQ), 70–164 (DFSE…VEGQ), and 221–313 (TTDN…KQRV). Basic and acidic residues predominate over residues 40–50 (ENYKDNSDHSN). Residues 73–82 (ESFNDNQNLK) are compositionally biased toward polar residues. Residues 83 to 134 (NFNTTDNNFNDDYNNDYDSNNDSNNDSNNDSNNDYDNESNNYFNNDSNNDSN) show a composition bias toward low complexity. The segment covering 141-150 (ETTKHKLPIE) has biased composition (basic and acidic residues). The segment covering 221 to 235 (TTDNQSNTESSQENN) has biased composition (low complexity). Basic and acidic residues-rich tracts occupy residues 236-249 (VIKK…DKQP) and 259-275 (IVPK…KSIK). Over residues 288 to 306 (IDQSNKLGKSYNTNNNNSK) the composition is skewed to polar residues. The stretch at 390 to 423 (NKASIAELKKMRLEQRKREIEEKRRQVENKKPDS) forms a coiled coil.

This is an uncharacterized protein from Acanthamoeba polyphaga mimivirus (APMV).